We begin with the raw amino-acid sequence, 226 residues long: UPF0502 protein azo0627 (226 aa).

This sequence belongs to the UPF0502 family.

This is UPF0502 protein azo0627 from Azoarcus sp. (strain BH72).